The primary structure comprises 649 residues: Protein translocase subunit SecA 2 (649 aa).

ATP contacts are provided by residues Gln105, 123 to 127, and Asp535; that span reads GEGKT.

Belongs to the SecA family. Monomer and homodimer. Part of the essential Sec protein translocation apparatus which comprises SecA, SecYEG and auxiliary proteins SecDF-YajC and YidC.

The protein resides in the cell inner membrane. Its subcellular location is the cytoplasm. It carries out the reaction ATP + H2O + cellular proteinSide 1 = ADP + phosphate + cellular proteinSide 2.. In terms of biological role, part of the Sec protein translocase complex. Interacts with the SecYEG preprotein conducting channel. Has a central role in coupling the hydrolysis of ATP to the transfer of proteins into and across the cell membrane, serving both as a receptor for the preprotein-SecB complex and as an ATP-driven molecular motor driving the stepwise translocation of polypeptide chains across the membrane. The protein is Protein translocase subunit SecA 2 of Magnetococcus marinus (strain ATCC BAA-1437 / JCM 17883 / MC-1).